The following is a 135-amino-acid chain: Large ribosomal subunit protein mL41 (135 aa).

Residues M1 to R13 constitute a mitochondrion transit peptide.

It belongs to the mitochondrion-specific ribosomal protein mL41 family. In terms of assembly, component of the mitochondrial ribosome large subunit (39S) which comprises a 16S rRNA and about 50 distinct proteins. Interacts with BCL2.

The protein resides in the mitochondrion. In terms of biological role, component of the mitochondrial ribosome large subunit. Also involved in apoptosis and cell cycle. Enhances p53/TP53 stability, thereby contributing to p53/TP53-induced apoptosis in response to growth-inhibitory condition. Enhances p53/TP53 translocation to the mitochondria. Has the ability to arrest the cell cycle at the G1 phase, possibly by stabilizing the CDKN1A and CDKN1B (p27Kip1) proteins. The sequence is that of Large ribosomal subunit protein mL41 (Mrpl41) from Mus musculus (Mouse).